We begin with the raw amino-acid sequence, 807 residues long: MVLEVPSITPGELHDLMRLHQDAEWPECKKMFPWAHDISFGQPPDFPHSLAIVKSQSDANNSALLRNSLEVNDIFQSWKVRTSFHREGDTCETGNDSNGFQYPNNTKELLNLLKFQIRQLELQVDDVALENAATYCHNHSILPFLKVDPRGLSLELKRYSRNKVGSNTTLKRSGQDVWGRRGLFRRFDLQCAKMIEMVDNIVIYCSRTGGSTDMQTESAPACSHEGNCPNCTTLALLLQICLMFVQKGYVGSGGSLYKTNLFICTYQNFNTDIPQTLIGTPLLDNEFFKNNTPLNLCSSPSEIVCFNNVDKNMVLCEKLELNKLTSATRLEETGLICGNTTDWHNYQIIKKNNISLTHRFEENTSIVNLKSLNYDTDNPTTSISQLYNIPNTKEVWKLIIKCTSNSQMPSLTKIRTYLDLLLDDDASKSQEHLHLTFPASGSIGLGNLNIQSVEILLNVCYLIFQVSQVQELLTFMYCEDGYTETSLLLTAYIIFHFNIPLQDALLRIHPRPFFLFPSDLQILGHLQPVLREFSPQNGSNLKLYANALKFRDKSFQLHISSELFSSIFFMKIPLESNFVNLKGPLPSRILRHLYLGSLDHAQNPALLKSLGITHIVSVGEVVSWTLNKDKIAHPVRPHRAITMTNTNEVAGNTTCNKSRNRADTVVSDKQENGSNVVISENSGFQICQIENLDDNGKDPLFHQIDKVLDFISNSEATGGKVLVHCMVGVSRSATVCIAECMRYLQCDLASAYLFVRVRRLNVIIQPNLFFVYELFKWWKKHYNREKDKTMDWHIICRGIAEVNMKYT.

The 199-residue stretch at 585–783 folds into the Tyrosine-protein phosphatase domain; the sequence is LPSRILRHLY…LFKWWKKHYN (199 aa). Residues 593–807 form a catalytic region; it reads LYLGSLDHAQ…GIAEVNMKYT (215 aa). The active-site Phosphocysteine intermediate is the C725.

Belongs to the protein-tyrosine phosphatase family. Non-receptor class dual specificity subfamily.

It catalyses the reaction O-phospho-L-tyrosyl-[protein] + H2O = L-tyrosyl-[protein] + phosphate. It carries out the reaction O-phospho-L-seryl-[protein] + H2O = L-seryl-[protein] + phosphate. The catalysed reaction is O-phospho-L-threonyl-[protein] + H2O = L-threonyl-[protein] + phosphate. Its function is as follows. Protein phosphatase with specificity for serine, threonine, and tyrosine residues; has a role in the DNA synthesis phase of the cell cycle. The chain is Dual specificity protein phosphatase PPS1 (PPS1) from Saccharomyces cerevisiae (strain ATCC 204508 / S288c) (Baker's yeast).